We begin with the raw amino-acid sequence, 352 residues long: Protein RecA (352 aa).

Residue 74 to 81 coordinates ATP; sequence GPESSGKT.

The protein belongs to the RecA family.

The protein localises to the cytoplasm. Its function is as follows. Can catalyze the hydrolysis of ATP in the presence of single-stranded DNA, the ATP-dependent uptake of single-stranded DNA by duplex DNA, and the ATP-dependent hybridization of homologous single-stranded DNAs. It interacts with LexA causing its activation and leading to its autocatalytic cleavage. The chain is Protein RecA from Ralstonia nicotianae (strain ATCC BAA-1114 / GMI1000) (Ralstonia solanacearum).